The primary structure comprises 815 residues: Probable disease resistance protein At5g66910 (815 aa).

In terms of domain architecture, RPW8 spans 1–150; the sequence is MVVVDWLGLG…NINKKLDRLS (150 aa). 2 NB-ARC domains span residues 156–283 and 341–440; these read PLVS…DVWQ and SPDE…DIWM. 196-203 contributes to the ATP binding site; it reads GPPGCGKT. LRR repeat units follow at residues 656-678, 680-702, 704-726, and 728-750; these read NLQE…IPEV, SLKT…IGNL, RLEV…TERL, and NLRS…IGKL.

The protein belongs to the disease resistance NB-LRR family.

In terms of biological role, probable disease resistance protein. The protein is Probable disease resistance protein At5g66910 of Arabidopsis thaliana (Mouse-ear cress).